Here is a 190-residue protein sequence, read N- to C-terminus: dCTP deaminase, dUMP-forming (190 aa).

Residues 101 to 106 (KSSLGR), D119, 127 to 129 (TLE), Q148, Y162, and Q174 contribute to the dCTP site. E129 (proton donor/acceptor) is an active-site residue. A disordered region spans residues 163 to 190 (GSTRVGSKYQGQRGPTPSRSYQNFITST). Residues 171 to 190 (YQGQRGPTPSRSYQNFITST) show a composition bias toward polar residues.

Belongs to the dCTP deaminase family. As to quaternary structure, homotrimer.

It carries out the reaction dCTP + 2 H2O = dUMP + NH4(+) + diphosphate. It functions in the pathway pyrimidine metabolism; dUMP biosynthesis; dUMP from dCTP: step 1/1. Its function is as follows. Bifunctional enzyme that catalyzes both the deamination of dCTP to dUTP and the hydrolysis of dUTP to dUMP without releasing the toxic dUTP intermediate. The chain is dCTP deaminase, dUMP-forming from Mycobacterium avium (strain 104).